The sequence spans 1165 residues: Protein hsr-9 (1165 aa).

Disordered regions lie at residues 1–26, 70–578, 608–713, and 874–913; these read MASSSNTMEFEEDDSTVTQTSLPTTT, AEDE…TEME, KYSM…IPLK, and TRARKPTTVSNQAKPKGRKKKGVDLVSSRGGSASPAEEEE. Low complexity predominate over residues 16-26; it reads TVTQTSLPTTT. Composition is skewed to basic and acidic residues over residues 98-114, 123-140, and 149-162; these read KDAKSGESMNDSEKSES, TFEKKIISMDTSDDKLDI, and DTEKPEENEEKVVG. 3 stretches are compositionally biased toward acidic residues: residues 163-179, 211-230, and 280-289; these read DEDEEDIDDVQEDDEDE, EKEEPENEDDTEEPENEVEV, and GESEANEENQ. Residues 306-317 show a composition bias toward polar residues; that stretch reads ATVSSTPSSNTP. Over residues 397–408 the composition is skewed to basic and acidic residues; that stretch reads NTEHPTEEETPK. Over residues 415-431 the composition is skewed to low complexity; that stretch reads SAASSSATSSAVPTPRS. A compositionally biased stretch (basic and acidic residues) spans 446–461; that stretch reads LQEKETEDPTKTHDTN. The span at 533–543 shows a compositional bias: acidic residues; it reads DPIEEADETIE. Residues 554–563 are compositionally biased toward low complexity; sequence AAKSAPSSSK. 2 stretches are compositionally biased toward basic and acidic residues: residues 662 to 671 and 694 to 708; these read KKEEEHHEND and SEASDIKTPPAKKEP. A BRCT domain is found at 923-1028; the sequence is IGKNIFTGKV…KCVDYTDYVL (106 aa).

In terms of tissue distribution, expressed in germ cells.

Its subcellular location is the nucleus. Its function is as follows. May have a role in DNA double-strand break repair following gamma-irradiation. This Caenorhabditis elegans protein is Protein hsr-9.